The sequence spans 369 residues: UPF0283 membrane protein RPA1583 (369 aa).

Positions 1-61 (MTERVPPRRP…APPPPPPRAR (61 aa)) are disordered. The segment covering 34-51 (AKPSAKADARPAASAAGA) has biased composition (low complexity). A run of 3 helical transmembrane segments spans residues 90-110 (WGTV…WLWI), 124-144 (LGTI…IIIG), and 239-259 (VSLV…VAIA).

The protein belongs to the UPF0283 family.

Its subcellular location is the cell inner membrane. This is UPF0283 membrane protein RPA1583 from Rhodopseudomonas palustris (strain ATCC BAA-98 / CGA009).